Reading from the N-terminus, the 218-residue chain is Adenylate kinase (218 aa).

Residue 10 to 15 participates in ATP binding; that stretch reads GAGKGT. The interval 30–59 is NMP; it reads STGDMLRAAVKAGTPLGIAAKKIMDEGGLV. Residues T31, R36, 57 to 59, 85 to 88, and Q92 contribute to the AMP site; these read GLV and GFPR. Positions 122–159 are LID; the sequence is GRRVHPASGRTYHVKFNPPKVAGRDDVTGEELIQRDDD. ATP-binding positions include R123 and 132-133; that span reads TY. R156 and R167 together coordinate AMP. G203 contacts ATP.

Belongs to the adenylate kinase family. Monomer.

The protein localises to the cytoplasm. It carries out the reaction AMP + ATP = 2 ADP. It participates in purine metabolism; AMP biosynthesis via salvage pathway; AMP from ADP: step 1/1. Functionally, catalyzes the reversible transfer of the terminal phosphate group between ATP and AMP. Plays an important role in cellular energy homeostasis and in adenine nucleotide metabolism. This Herminiimonas arsenicoxydans protein is Adenylate kinase.